Consider the following 246-residue polypeptide: Ribonuclease PH (246 aa).

Phosphate-binding positions include Arg-91 and 129-131 (GTR).

This sequence belongs to the RNase PH family. In terms of assembly, homohexameric ring arranged as a trimer of dimers.

It carries out the reaction tRNA(n+1) + phosphate = tRNA(n) + a ribonucleoside 5'-diphosphate. Functionally, phosphorolytic 3'-5' exoribonuclease that plays an important role in tRNA 3'-end maturation. Removes nucleotide residues following the 3'-CCA terminus of tRNAs; can also add nucleotides to the ends of RNA molecules by using nucleoside diphosphates as substrates, but this may not be physiologically important. Probably plays a role in initiation of 16S rRNA degradation (leading to ribosome degradation) during starvation. This is Ribonuclease PH from Burkholderia vietnamiensis (strain G4 / LMG 22486) (Burkholderia cepacia (strain R1808)).